The primary structure comprises 189 residues: Shikimate kinase (189 aa).

Residue 11 to 16 participates in ATP binding; it reads GTGKSA. Position 15 (Ser15) interacts with Mg(2+). 3 residues coordinate substrate: Asp33, Arg57, and Gly79. Position 117 (Arg117) interacts with ATP. Arg135 provides a ligand contact to substrate.

It belongs to the shikimate kinase family. As to quaternary structure, monomer. Mg(2+) serves as cofactor.

Its subcellular location is the cytoplasm. The catalysed reaction is shikimate + ATP = 3-phosphoshikimate + ADP + H(+). It functions in the pathway metabolic intermediate biosynthesis; chorismate biosynthesis; chorismate from D-erythrose 4-phosphate and phosphoenolpyruvate: step 5/7. Catalyzes the specific phosphorylation of the 3-hydroxyl group of shikimic acid using ATP as a cosubstrate. This Desulforudis audaxviator (strain MP104C) protein is Shikimate kinase.